A 396-amino-acid chain; its full sequence is Acetate kinase (396 aa).

Asparagine 8 contacts Mg(2+). Position 15 (lysine 15) interacts with ATP. Arginine 89 is a binding site for substrate. Aspartate 146 functions as the Proton donor/acceptor in the catalytic mechanism. ATP-binding positions include 206 to 210 (HIGNG), 283 to 285 (DMR), and 331 to 335 (GVGEN). Mg(2+) is bound at residue glutamate 383.

This sequence belongs to the acetokinase family. As to quaternary structure, homodimer. Mg(2+) serves as cofactor. It depends on Mn(2+) as a cofactor.

The protein resides in the cytoplasm. It catalyses the reaction acetate + ATP = acetyl phosphate + ADP. The protein operates within metabolic intermediate biosynthesis; acetyl-CoA biosynthesis; acetyl-CoA from acetate: step 1/2. Functionally, catalyzes the formation of acetyl phosphate from acetate and ATP. Can also catalyze the reverse reaction. This Streptococcus pneumoniae (strain ATCC 700669 / Spain 23F-1) protein is Acetate kinase.